Consider the following 275-residue polypeptide: Fructoselysine 3-epimerase (275 aa).

Residue Glu148 is the Proton donor/acceptor of the active site. A divalent metal cation-binding residues include Glu148, Asp181, His207, and Glu247. The active-site Proton donor/acceptor is the Glu247.

The protein belongs to the FrlC family. As to quaternary structure, homooctamer. Requires Ni(2+) as cofactor. It depends on Co(2+) as a cofactor.

The enzyme catalyses N(6)-(D-psicosyl)-L-lysine = N(6)-(D-fructosyl)-L-lysine. Catalyzes the reversible interconversion of fructoselysine with its C-3 epimer, psicoselysine. Allows E.coli to utilize psicoselysine for growth. Does not act on psicose or fructoselysine 6-phosphate. The sequence is that of Fructoselysine 3-epimerase (frlC) from Escherichia coli O157:H7.